Reading from the N-terminus, the 132-residue chain is Small ribosomal subunit protein uS8 (132 aa).

Belongs to the universal ribosomal protein uS8 family. Part of the 30S ribosomal subunit. Contacts proteins S5 and S12.

Functionally, one of the primary rRNA binding proteins, it binds directly to 16S rRNA central domain where it helps coordinate assembly of the platform of the 30S subunit. In Chelativorans sp. (strain BNC1), this protein is Small ribosomal subunit protein uS8.